The primary structure comprises 309 residues: Mitochondrial import receptor subunit TOM34 (309 aa).

Ser8 carries the post-translational modification Phosphoserine. TPR repeat units lie at residues 9 to 42, 51 to 84, and 86 to 118; these read VEEL…LQAQ, SVLY…VPFS, and KPLL…DDNV. A Phosphoserine modification is found at Ser160. A disordered region spans residues 161–189; that stretch reads LPSENHKEMAKSKSKETTATKNRVPSAGD. A compositionally biased stretch (basic and acidic residues) spans 164–178; that stretch reads ENHKEMAKSKSKETT. A Phosphoserine modification is found at Ser186. TPR repeat units follow at residues 193 to 226, 227 to 260, and 262 to 294; these read ARVL…SNLE, SATY…DGKN, and KAFY…EPRN. Lys197 is covalently cross-linked (Glycyl lysine isopeptide (Lys-Gly) (interchain with G-Cter in SUMO2)).

Belongs to the Tom34 family. In terms of assembly, interacts with HSP90A, VCP, ATP6V1D, KIAA0665, AMPK, and DMAP1 through its TPR repeat. Ubiquitous.

The protein localises to the cytoplasm. The protein resides in the mitochondrion outer membrane. In terms of biological role, plays a role in the import of cytosolically synthesized preproteins into mitochondria. Binds the mature portion of precursor proteins. Interacts with cellular components, and possesses weak ATPase activity. May be a chaperone-like protein that helps to keep newly synthesized precursors in an unfolded import compatible state. In Homo sapiens (Human), this protein is Mitochondrial import receptor subunit TOM34 (TOMM34).